Here is a 122-residue protein sequence, read N- to C-terminus: Large ribosomal subunit protein uL14c (122 aa).

The protein belongs to the universal ribosomal protein uL14 family. In terms of assembly, part of the 50S ribosomal subunit.

Its subcellular location is the plastid. Binds to 23S rRNA. The sequence is that of Large ribosomal subunit protein uL14c from Cuscuta gronovii (Common dodder).